The sequence spans 155 residues: Egg cell-secreted protein 1.5 (155 aa).

The N-terminal stretch at 1–32 is a signal peptide; it reads MATKSTSKPLLLSFLMMSYLISTFHVITVAEG.

Belongs to the plant egg cell-secreted peptide family. Restricted to female reproductive tissues, specifically accumulating in storage vesicles of the unfertilized egg cell.

It is found in the cytoplasmic vesicle. The protein resides in the secreted. Its function is as follows. Involved in the regulation of gamete interactions during the double fertilization and to prevent multiple-pollen tube attraction; mediates the redistribution of the gamete fusogen HAP2/GCS1 to the cell surface after secretion upon sperm arrival. This Arabidopsis thaliana (Mouse-ear cress) protein is Egg cell-secreted protein 1.5 (EC1.5).